The sequence spans 498 residues: Glycerol kinase (498 aa).

Residue Thr-12 participates in ADP binding. 3 residues coordinate ATP: Thr-12, Thr-13, and Ser-14. Residue Thr-12 participates in sn-glycerol 3-phosphate binding. Arg-16 contacts ADP. Sn-glycerol 3-phosphate is bound by residues Arg-82, Tyr-134, and Asp-243. Glycerol contacts are provided by Arg-82, Tyr-134, Asp-243, and Gln-244. ADP-binding residues include Thr-265 and Gly-308. 4 residues coordinate ATP: Thr-265, Gly-308, Gln-312, and Gly-411. ADP is bound at residue Gly-411.

Belongs to the FGGY kinase family.

The enzyme catalyses glycerol + ATP = sn-glycerol 3-phosphate + ADP + H(+). It functions in the pathway polyol metabolism; glycerol degradation via glycerol kinase pathway; sn-glycerol 3-phosphate from glycerol: step 1/1. With respect to regulation, inhibited by fructose 1,6-bisphosphate (FBP). Its function is as follows. Key enzyme in the regulation of glycerol uptake and metabolism. Catalyzes the phosphorylation of glycerol to yield sn-glycerol 3-phosphate. The protein is Glycerol kinase of Brucella suis (strain ATCC 23445 / NCTC 10510).